The sequence spans 147 residues: Large ribosomal subunit protein uL15 (147 aa).

Basic and acidic residues predominate over residues 1-13; that stretch reads MKLENLKSKEGSR. Positions 1–54 are disordered; sequence MKLENLKSKEGSRHKTKRVGRGFGSGIGKTSTRGSKGQKSRKSGHTRPGFEGGQ. Residues 36–45 are compositionally biased toward basic residues; it reads KGQKSRKSGH.

Belongs to the universal ribosomal protein uL15 family. Part of the 50S ribosomal subunit.

Its function is as follows. Binds to the 23S rRNA. This chain is Large ribosomal subunit protein uL15, found in Malacoplasma penetrans (strain HF-2) (Mycoplasma penetrans).